A 62-amino-acid chain; its full sequence is Sperm protamine P1 (62 aa).

A disordered region spans residues 1-62; the sequence is MARYRHSRSR…RYSRRRRRRY (62 aa).

It belongs to the protamine P1 family. In terms of tissue distribution, testis.

It is found in the nucleus. The protein resides in the chromosome. Protamines substitute for histones in the chromatin of sperm during the haploid phase of spermatogenesis. They compact sperm DNA into a highly condensed, stable and inactive complex. The protein is Sperm protamine P1 (PRM1) of Bettongia penicillata (Brush-tailed bettong).